Here is a 203-residue protein sequence, read N- to C-terminus: MVKVKICGLRRKEDIEYANELKPDYVGFVFAKSKRQIEVEQALDLISLLDKEIKTVGVFVNEPVENALKIAQTLNLDVLQFHGDETQDYIDNFKNFTVWKAIRIKDKEDLEKTKQFKVNSFVFDTLTKNEYGGTGKTFNWKVLKGMELNVPIILAGGLNENNVEEAIKIVDPYAVDVSSGVETEGYKDFKKLKSFIEKVRGIR.

This sequence belongs to the TrpF family.

It catalyses the reaction N-(5-phospho-beta-D-ribosyl)anthranilate = 1-(2-carboxyphenylamino)-1-deoxy-D-ribulose 5-phosphate. It participates in amino-acid biosynthesis; L-tryptophan biosynthesis; L-tryptophan from chorismate: step 3/5. The protein is N-(5'-phosphoribosyl)anthranilate isomerase of Thermoanaerobacter pseudethanolicus (strain ATCC 33223 / 39E) (Clostridium thermohydrosulfuricum).